Consider the following 317-residue polypeptide: Acetyl-coenzyme A carboxylase carboxyl transferase subunit alpha (317 aa).

The region spanning 39 to 293 (KLEAKAQKAL…KEAVVEALGA (255 aa)) is the CoA carboxyltransferase C-terminal domain.

This sequence belongs to the AccA family. Acetyl-CoA carboxylase is a heterohexamer composed of biotin carboxyl carrier protein (AccB), biotin carboxylase (AccC) and two subunits each of ACCase subunit alpha (AccA) and ACCase subunit beta (AccD).

It is found in the cytoplasm. The catalysed reaction is N(6)-carboxybiotinyl-L-lysyl-[protein] + acetyl-CoA = N(6)-biotinyl-L-lysyl-[protein] + malonyl-CoA. It functions in the pathway lipid metabolism; malonyl-CoA biosynthesis; malonyl-CoA from acetyl-CoA: step 1/1. Component of the acetyl coenzyme A carboxylase (ACC) complex. First, biotin carboxylase catalyzes the carboxylation of biotin on its carrier protein (BCCP) and then the CO(2) group is transferred by the carboxyltransferase to acetyl-CoA to form malonyl-CoA. The polypeptide is Acetyl-coenzyme A carboxylase carboxyl transferase subunit alpha (Beijerinckia indica subsp. indica (strain ATCC 9039 / DSM 1715 / NCIMB 8712)).